A 623-amino-acid polypeptide reads, in one-letter code: Peptidoglycan D,D-transpeptidase MrdA (623 aa).

Residues 17 to 37 traverse the membrane as a helical segment; sequence VIVAFGVVVVCFGILIFNLYN. Residue S326 is the Acyl-ester intermediate of the active site.

This sequence belongs to the transpeptidase family. MrdA subfamily.

It is found in the cell inner membrane. The catalysed reaction is Preferential cleavage: (Ac)2-L-Lys-D-Ala-|-D-Ala. Also transpeptidation of peptidyl-alanyl moieties that are N-acyl substituents of D-alanine.. It participates in cell wall biogenesis; peptidoglycan biosynthesis. Catalyzes cross-linking of the peptidoglycan cell wall. In Salmonella typhimurium (strain SL1344), this protein is Peptidoglycan D,D-transpeptidase MrdA.